Here is a 188-residue protein sequence, read N- to C-terminus: dCTP deaminase (188 aa).

DCTP-binding positions include 111–116 (KSTYAR), 135–137 (TLE), Gln-156, Tyr-170, and Gln-180. The Proton donor/acceptor role is filled by Glu-137.

Belongs to the dCTP deaminase family. Homotrimer.

It carries out the reaction dCTP + H2O + H(+) = dUTP + NH4(+). It functions in the pathway pyrimidine metabolism; dUMP biosynthesis; dUMP from dCTP (dUTP route): step 1/2. In terms of biological role, catalyzes the deamination of dCTP to dUTP. This chain is dCTP deaminase, found in Pseudomonas syringae pv. tomato (strain ATCC BAA-871 / DC3000).